A 488-amino-acid polypeptide reads, in one-letter code: Splicing factor U2AF 65 kDa subunit (488 aa).

Basic and acidic residues-rich tracts occupy residues 25 to 55 and 78 to 129; these read LESLQEDVKPDVKSDLNGNGEEKRDRDDEDR and DRRD…KYRF. Residues 25–133 are disordered; sequence LESLQEDVKP…PKKYRFWDVP (109 aa). RRM domains follow at residues 175–257, 282–359, and 389–479; these read RRLY…RPRD, NKIF…LACA, and EILC…YYDV.

Belongs to the splicing factor SR family. Forms a heterodimer with the U2AF small subunit.

Its subcellular location is the nucleus. Functionally, necessary for the splicing of pre-mRNA. Binds to the polypyrimidine tract of introns early during spliceosome assembly. The polypeptide is Splicing factor U2AF 65 kDa subunit (uaf-1) (Caenorhabditis briggsae).